The following is a 538-amino-acid chain: Capsular polysaccharide biosynthesis protein RkpI (538 aa).

A run of 6 helical transmembrane segments spans residues 16–36 (LHDY…AVIF), 70–90 (VIAL…YAAA), 114–134 (LVFS…IFYA), 139–159 (IVFW…YMYF), 170–190 (LFWV…LFYG), and 212–232 (NTVR…WLGV).

It localises to the cell membrane. Its pathway is capsule biogenesis; capsule polysaccharide biosynthesis. Its function is as follows. Involved in antigen K (capsular polysaccharide) biosynthesis. The chain is Capsular polysaccharide biosynthesis protein RkpI (rkpI) from Rhizobium meliloti (strain 1021) (Ensifer meliloti).